A 106-amino-acid polypeptide reads, in one-letter code: NADH dehydrogenase [ubiquinone] 1 alpha subcomplex subunit 8-B (106 aa).

The residue at position 2 (S2) is an N-acetylserine. CHCH domains lie at G26 to L67 and H68 to K106. Short sequence motifs (cx9C motif) lie at residues C29–C39, C49–C59, and C71–C81. 4 disulfides stabilise this stretch: C29–C59, C39–C49, C71–C103, and C81–C92. A Cx10C motif motif is present at residues C92–C103.

This sequence belongs to the complex I NDUFA8 subunit family. Complex I is composed of at least 49 different subunits.

The protein resides in the mitochondrion. The protein localises to the mitochondrion intermembrane space. Its function is as follows. Accessory subunit of the mitochondrial membrane respiratory chain NADH dehydrogenase (Complex I), that is believed not to be involved in catalysis. Complex I functions in the transfer of electrons from NADH to the respiratory chain. The immediate electron acceptor for the enzyme is believed to be ubiquinone. This is NADH dehydrogenase [ubiquinone] 1 alpha subcomplex subunit 8-B from Arabidopsis thaliana (Mouse-ear cress).